Consider the following 240-residue polypeptide: DNA repair protein RecO (240 aa).

This sequence belongs to the RecO family.

Involved in DNA repair and RecF pathway recombination. This is DNA repair protein RecO from Xanthomonas euvesicatoria pv. vesicatoria (strain 85-10) (Xanthomonas campestris pv. vesicatoria).